An 81-amino-acid polypeptide reads, in one-letter code: Small cysteine-rich protein 4 (81 aa).

A signal peptide spans 1–23 (MDTKVACLLLIILGALTVQGAVS). A propeptide spanning residues 24-25 (GN) is cleaved from the precursor.

Belongs to the Cnidaria small cysteine-rich protein (SCRiP) family. beta subfamily. Post-translationally, contains 4 disulfide bonds.

The protein localises to the secreted. It localises to the nematocyst. Its function is as follows. Induces neurotoxic symptoms on zebrafish. Has also been claimed to be implied in calcification, but tests on homolog proteins suggest that proteins of this family have a neurotoxic function and not a calcification function. This Orbicella faveolata (Mountainous star coral) protein is Small cysteine-rich protein 4.